Reading from the N-terminus, the 793-residue chain is E3 UFM1-protein ligase 1 (793 aa).

A2 is modified (N-acetylalanine). The mediates interaction with DDRGK1 stretch occupies residues A2–P200. The segment at A2–F212 is required for E3 UFM1-protein ligase activity. Residues D121–S250 are involved in CDK5RAP3-binding. Positions P200–D400 are mediates interaction with TRIP4. Residues V410–D473 are disordered. An Omega-N-methylarginine modification is found at R433. Residues S458 and S462 each carry the phosphoserine modification. Positions I490–L683 are mediates interaction with CDK5RAP3. The residue at position 535 (T535) is a Phosphothreonine. Positions N742–N765 are disordered. Residues S752 and S753 each carry the phosphoserine modification.

The protein belongs to the UFL1 family. Catalytic component of the UFM1 ribosome E3 ligase (UREL) complex, composed of UFL1, DDRGK1 and CDK5RAP3. Interacts with E2-like enzyme UFC1. Interacts with RELA. Interacts with NBN; promoting recruitment to double-strand breaks following DNA damage. Interacts (when phosphorylated) with YWHAG/14-3-3-gamma; sequestering UFL1 and preventing its association with PDCD1/PD-1 substrate. Ubiquitinated, leading to its degradation by the proteasome. Interaction with CDK5RAP3 protects both proteins against ubiquitination and degradation via the proteasome. In terms of processing, phosphorylated at Ser-462 by ATM, enhancing protein ligase activity and promoting ATM activation in a positive feedback loop. Phosphorylation at Thr-535 by AMPK promotes its interaction with YWHAG/14-3-3-gamma, thereby preventing UFL1 association with PDCD1/PD-1 substrate. Ubiquitously expressed with higher expression in pancreatic islets and other secretory tissues. In the embryonic brain at 17 dpc, detected in Sox2-positive neural stem cells and in Slc1a3/GLAST-positive radial glia. In perinatal brain, highly expressed in Slc1a3-positive Bergmann glia of the cerebellum. Continues to be expressed in Bergmann glia of adult brain at 16 weeks. Expressed in adult heart. Highly expressed in the intestinal exocrine cells.

The protein localises to the endoplasmic reticulum membrane. It localises to the cytoplasm. Its subcellular location is the cytosol. The protein resides in the nucleus. It is found in the chromosome. Its function is as follows. E3 protein ligase that mediates ufmylation, the covalent attachment of the ubiquitin-like modifier UFM1 to lysine residues on target proteins, and which plays a key role in various processes, such as ribosome recycling, response to DNA damage, interferon response or reticulophagy (also called ER-phagy). Catalyzes ufmylation of many protein, such as CD274/PD-L1, CDK5RAP3, CYB5R3, DDRGK1, EIF6, histone H4, MRE11, P4HB, PDCD1/PD-1, TRIP4, RPN1, RPS20/uS10, RPL10/uL16, RPL26/uL24, SYVN1/HRD1 and TP53/p53. As part of the UREL complex, plays a key role in ribosome recycling by catalyzing mono-ufmylation of RPL26/uL24 subunit of the 60S ribosome. Ufmylation of RPL26/uL24 occurs on free 60S ribosomes following ribosome dissociation: it weakens the junction between post-termination 60S subunits and SEC61 translocons, promoting release and recycling of the large ribosomal subunit from the endoplasmic reticulum membrane. Ufmylation of RPL26/uL24 and subsequent 60S ribosome recycling either take place after normal termination of translation or after ribosome stalling during cotranslational translocation at the endoplasmic reticulum. Involved in reticulophagy in response to endoplasmic reticulum stress by mediating ufmylation of proteins such as CYB5R3 and RPN1, thereby promoting lysosomal degradation of ufmylated proteins. Ufmylation in response to endoplasmic reticulum stress is essential for processes such as hematopoiesis, blood vessel morphogenesis or inflammatory response. Mediates ufmylation of DDRGK1 and CDK5RAP3; the role of these modifications is however unclear: as both DDRGK1 and CDK5RAP3 act as substrate adapters for ufmylation, it is uncertain whether ufmylation of these proteins is a collateral effect or is required for ufmylation. Acts as a negative regulator of T-cell activation by mediating ufmylation and stabilization of PDCD1/PD-1. Also involved in the response to DNA damage: recruited to double-strand break sites following DNA damage and mediates monoufmylation of histone H4 and ufmylation of MRE11. Mediates ufmylation of TP53/p53, promoting its stability. Catalyzes ufmylation of TRIP4, thereby playing a role in nuclear receptor-mediated transcription. Required for hematopoietic stem cell function and hematopoiesis. This is E3 UFM1-protein ligase 1 from Mus musculus (Mouse).